We begin with the raw amino-acid sequence, 219 residues long: 2-hydroxy-3-keto-5-methylthiopentenyl-1-phosphate phosphatase (219 aa).

It belongs to the HAD-like hydrolase superfamily. MtnX family.

It catalyses the reaction 2-hydroxy-5-methylsulfanyl-3-oxopent-1-enyl phosphate + H2O = 1,2-dihydroxy-5-(methylsulfanyl)pent-1-en-3-one + phosphate. It participates in amino-acid biosynthesis; L-methionine biosynthesis via salvage pathway; L-methionine from S-methyl-5-thio-alpha-D-ribose 1-phosphate: step 4/6. Its function is as follows. Dephosphorylates 2-hydroxy-3-keto-5-methylthiopentenyl-1-phosphate (HK-MTPenyl-1-P) yielding 1,2-dihydroxy-3-keto-5-methylthiopentene (DHK-MTPene). The sequence is that of 2-hydroxy-3-keto-5-methylthiopentenyl-1-phosphate phosphatase from Bacillus cereus (strain G9842).